A 1455-amino-acid polypeptide reads, in one-letter code: DNA polymerase II large subunit (1455 aa).

Positions 1409–1440 (GLLENLSNGSKKTEKAEKAEKPRKKSDEKPKK) are disordered. Positions 1419 to 1438 (KKTEKAEKAEKPRKKSDEKP) are enriched in basic and acidic residues.

Belongs to the archaeal DNA polymerase II family. Heterodimer of a large subunit and a small subunit. Post-translationally, this protein undergoes a protein self splicing that involves a post-translational excision of the intervening region (intein) followed by peptide ligation.

It catalyses the reaction DNA(n) + a 2'-deoxyribonucleoside 5'-triphosphate = DNA(n+1) + diphosphate. It carries out the reaction Exonucleolytic cleavage in the 3'- to 5'-direction to yield nucleoside 5'-phosphates.. In terms of biological role, possesses two activities: a DNA synthesis (polymerase) and an exonucleolytic activity that degrades single-stranded DNA in the 3'- to 5'-direction. Has a template-primer preference which is characteristic of a replicative DNA polymerase. This is DNA polymerase II large subunit (polC) from Pyrococcus abyssi (strain GE5 / Orsay).